Consider the following 442-residue polypeptide: Casein kinase 1-like protein 10 (442 aa).

Residues 9–278 (FKLGRKIGSG…LKRLFRDLFI (270 aa)) form the Protein kinase domain. ATP contacts are provided by residues 15–23 (IGSGSFGEL) and K38. Catalysis depends on D128, which acts as the Proton acceptor. 2 disordered regions span residues 299–323 (GSIS…ERNE) and 381–421 (AVMS…LSAR). Pro residues predominate over residues 305–317 (RPNPKPALDPPGP). Residues 384 to 394 (SSSQPGSSGEL) show a composition bias toward low complexity. Over residues 400-417 (SKLFSSSAQKIQPVQETK) the composition is skewed to polar residues.

This sequence belongs to the protein kinase superfamily. CK1 Ser/Thr protein kinase family. Casein kinase I subfamily. In terms of assembly, monomer. Post-translationally, autophosphorylated.

It localises to the cytoplasm. It is found in the cell junction. The protein localises to the plasmodesma. The catalysed reaction is L-seryl-[protein] + ATP = O-phospho-L-seryl-[protein] + ADP + H(+). It catalyses the reaction L-threonyl-[protein] + ATP = O-phospho-L-threonyl-[protein] + ADP + H(+). Its function is as follows. Casein kinases are operationally defined by their preferential utilization of acidic proteins such as caseins as substrates. It can phosphorylate a large number of proteins. In Arabidopsis thaliana (Mouse-ear cress), this protein is Casein kinase 1-like protein 10.